Here is a 458-residue protein sequence, read N- to C-terminus: Pentatricopeptide repeat-containing protein At1g77405 (458 aa).

PPR repeat units lie at residues 164 to 198 (TTAS…HCKP), 199 to 233 (DVYA…GFRY), 236 to 271 (DTYT…NRMF), 282 to 316 (DVVT…GCVP), 317 to 351 (NQVT…GHGV), 353 to 387 (GSST…GLVP), and 388 to 419 (REYT…MREG).

It belongs to the PPR family. P subfamily.

This chain is Pentatricopeptide repeat-containing protein At1g77405, found in Arabidopsis thaliana (Mouse-ear cress).